Reading from the N-terminus, the 121-residue chain is MKKVLALMVAATLGLSSVAFAADTTATATPAATSTTATVAAQTKATQHQKHKVTKKTTEQKAQAAKKHEKKASVQKTPVQKAQAAKKHVKKASVQKAPVQKAQAAKKHHKTAKKPVAAPAA.

Positions 1-21 (MKKVLALMVAATLGLSSVAFA) are cleaved as a signal peptide. Residues 22 to 63 (ADTTATATPAATSTTATVAAQTKATQHQKHKVTKKTTEQKAQ) constitute a propeptide that is removed on maturation. A disordered region spans residues 40 to 121 (AAQTKATQHQ…AKKPVAAPAA (82 aa)). The segment covering 84-93 (AAKKHVKKAS) has biased composition (basic residues). Low complexity predominate over residues 94 to 103 (VQKAPVQKAQ). A compositionally biased stretch (basic residues) spans 104-113 (AAKKHHKTAK).

Belongs to the Asr family. Post-translationally, proteolytic processing gives rise to the active protein.

The protein localises to the periplasm. In terms of biological role, required for growth and/or survival at acidic conditions. In Yersinia pestis bv. Antiqua (strain Antiqua), this protein is Acid shock protein.